A 473-amino-acid chain; its full sequence is Siroheme synthase (473 aa).

Positions 1–203 are precorrin-2 dehydrogenase /sirohydrochlorin ferrochelatase; it reads MTLFPIFADL…QQPGLAEQEL (203 aa). Residues 22-23 and 43-44 each bind NAD(+); these read AV and PR. Serine 128 is subject to Phosphoserine. Residues 216–473 are uroporphyrinogen-III C-methyltransferase; it reads GSVVLVGAGP…GLPGPQALAA (258 aa). Proline 225 is a binding site for S-adenosyl-L-methionine. Aspartate 248 acts as the Proton acceptor in catalysis. The active-site Proton donor is lysine 270. S-adenosyl-L-methionine is bound by residues 302–304, isoleucine 307, 332–333, methionine 384, and glycine 413; these read GGD and TA.

The protein in the N-terminal section; belongs to the precorrin-2 dehydrogenase / sirohydrochlorin ferrochelatase family. It in the C-terminal section; belongs to the precorrin methyltransferase family.

It catalyses the reaction uroporphyrinogen III + 2 S-adenosyl-L-methionine = precorrin-2 + 2 S-adenosyl-L-homocysteine + H(+). The catalysed reaction is precorrin-2 + NAD(+) = sirohydrochlorin + NADH + 2 H(+). It carries out the reaction siroheme + 2 H(+) = sirohydrochlorin + Fe(2+). It functions in the pathway cofactor biosynthesis; adenosylcobalamin biosynthesis; precorrin-2 from uroporphyrinogen III: step 1/1. It participates in cofactor biosynthesis; adenosylcobalamin biosynthesis; sirohydrochlorin from precorrin-2: step 1/1. Its pathway is porphyrin-containing compound metabolism; siroheme biosynthesis; precorrin-2 from uroporphyrinogen III: step 1/1. The protein operates within porphyrin-containing compound metabolism; siroheme biosynthesis; siroheme from sirohydrochlorin: step 1/1. It functions in the pathway porphyrin-containing compound metabolism; siroheme biosynthesis; sirohydrochlorin from precorrin-2: step 1/1. In terms of biological role, multifunctional enzyme that catalyzes the SAM-dependent methylations of uroporphyrinogen III at position C-2 and C-7 to form precorrin-2 via precorrin-1. Then it catalyzes the NAD-dependent ring dehydrogenation of precorrin-2 to yield sirohydrochlorin. Finally, it catalyzes the ferrochelation of sirohydrochlorin to yield siroheme. The chain is Siroheme synthase from Bordetella pertussis (strain Tohama I / ATCC BAA-589 / NCTC 13251).